Consider the following 64-residue polypeptide: Chromatin protein Cren7 (64 aa).

Belongs to the Cren7 family. Monomer. In terms of processing, methylated at multiple sites, to varying extents.

It localises to the chromosome. It is found in the cytoplasm. Its function is as follows. A chromatin protein, binds double-stranded DNA without sequence specificity. Constrains negative DNA supercoils. The polypeptide is Chromatin protein Cren7 (Aeropyrum pernix (strain ATCC 700893 / DSM 11879 / JCM 9820 / NBRC 100138 / K1)).